The primary structure comprises 668 residues: Ras guanine nucleotide exchange factor D (668 aa).

Positions 27-224 (KKLESIFGIA…LMVMDIDEFD (198 aa)) constitute a Rho-GAP domain. In terms of domain architecture, N-terminal Ras-GEF spans 237–362 (GESIVKAATF…YFQTFFKPVI (126 aa)). The Ras-GEF domain occupies 433-663 (GSNIIAQQIT…HSISHKLEPR (231 aa)).

Its function is as follows. Promotes the exchange of Ras-bound GDP by GTP. The polypeptide is Ras guanine nucleotide exchange factor D (gefD) (Dictyostelium discoideum (Social amoeba)).